A 200-amino-acid polypeptide reads, in one-letter code: 3-isopropylmalate dehydratase small subunit (200 aa).

The protein belongs to the LeuD family. LeuD type 1 subfamily. In terms of assembly, heterodimer of LeuC and LeuD.

It catalyses the reaction (2R,3S)-3-isopropylmalate = (2S)-2-isopropylmalate. Its pathway is amino-acid biosynthesis; L-leucine biosynthesis; L-leucine from 3-methyl-2-oxobutanoate: step 2/4. In terms of biological role, catalyzes the isomerization between 2-isopropylmalate and 3-isopropylmalate, via the formation of 2-isopropylmaleate. In Vibrio vulnificus (strain YJ016), this protein is 3-isopropylmalate dehydratase small subunit.